A 406-amino-acid polypeptide reads, in one-letter code: L-methionine gamma-lyase (406 aa).

Pyridoxal 5'-phosphate is bound by residues 76 to 78 and 106 to 107; these read YQR and GM. Residue Tyr132 participates in L-homocysteine binding. 219-221 provides a ligand contact to pyridoxal 5'-phosphate; sequence SAT. The residue at position 222 (Lys222) is an N6-(pyridoxal phosphate)lysine. Arg380 contributes to the L-homocysteine binding site. L-methionine is bound at residue Arg380.

It belongs to the trans-sulfuration enzymes family. L-methionine gamma-lyase subfamily. Homotetramer. Pyridoxal 5'-phosphate serves as cofactor.

The enzyme catalyses L-methionine + H2O = methanethiol + 2-oxobutanoate + NH4(+). The catalysed reaction is L-homocysteine + H2O = 2-oxobutanoate + hydrogen sulfide + NH4(+) + H(+). With respect to regulation, is inhibited in vitro by carbonyl reagents, completely inactivated by DL-propargylglycine, and unaffected by metal-chelating agents. Functionally, catalyzes the alpha,gamma-elimination of L-methionine to produce methanethiol, 2-oxobutanoate and ammonia. May be responsible for the production of methanethiol associated with desirable Cheddar-type sulfur notes during cheese ripening. Is also able to catalyze the alpha,gamma-elimination of L-homocysteine and DL-selenomethionine, but has no activity toward L-cysteine, L-cystathionine, S-adenosyl-L-homocysteine and D-methionine. The chain is L-methionine gamma-lyase from Brevibacterium aurantiacum.